The following is a 293-amino-acid chain: 4-hydroxybenzoate octaprenyltransferase (293 aa).

8 consecutive transmembrane segments (helical) span residues 26-48 (PIGT…GGMP), 98-118 (TEAK…DLLL), 122-142 (TFLL…MKRF), 145-165 (LPQV…YGAV), 167-187 (ESLP…TVAY), 218-238 (IIAL…WISQ), 241-261 (WGYF…CWLT), and 272-292 (AFLN…VGIY).

This sequence belongs to the UbiA prenyltransferase family. Mg(2+) serves as cofactor.

It localises to the cell inner membrane. It catalyses the reaction all-trans-octaprenyl diphosphate + 4-hydroxybenzoate = 4-hydroxy-3-(all-trans-octaprenyl)benzoate + diphosphate. The protein operates within cofactor biosynthesis; ubiquinone biosynthesis. In terms of biological role, catalyzes the prenylation of para-hydroxybenzoate (PHB) with an all-trans polyprenyl group. Mediates the second step in the final reaction sequence of ubiquinone-8 (UQ-8) biosynthesis, which is the condensation of the polyisoprenoid side chain with PHB, generating the first membrane-bound Q intermediate 3-octaprenyl-4-hydroxybenzoate. The chain is 4-hydroxybenzoate octaprenyltransferase from Actinobacillus pleuropneumoniae serotype 3 (strain JL03).